The chain runs to 184 residues: ATP synthase subunit delta (184 aa).

The protein belongs to the ATPase delta chain family. In terms of assembly, F-type ATPases have 2 components, F(1) - the catalytic core - and F(0) - the membrane proton channel. F(1) has five subunits: alpha(3), beta(3), gamma(1), delta(1), epsilon(1). F(0) has three main subunits: a(1), b(2) and c(10-14). The alpha and beta chains form an alternating ring which encloses part of the gamma chain. F(1) is attached to F(0) by a central stalk formed by the gamma and epsilon chains, while a peripheral stalk is formed by the delta and b chains.

The protein localises to the cell membrane. F(1)F(0) ATP synthase produces ATP from ADP in the presence of a proton or sodium gradient. F-type ATPases consist of two structural domains, F(1) containing the extramembraneous catalytic core and F(0) containing the membrane proton channel, linked together by a central stalk and a peripheral stalk. During catalysis, ATP synthesis in the catalytic domain of F(1) is coupled via a rotary mechanism of the central stalk subunits to proton translocation. In terms of biological role, this protein is part of the stalk that links CF(0) to CF(1). It either transmits conformational changes from CF(0) to CF(1) or is implicated in proton conduction. The sequence is that of ATP synthase subunit delta from Amoebophilus asiaticus (strain 5a2).